Consider the following 356-residue polypeptide: uncharacterized protein (356 aa).

The chain crosses the membrane as a helical span at residues 8 to 28 (ILGFVLFVLGAAIFLTEVMHS).

It to C.elegans C41C4.1 and C18B2.1.

Its subcellular location is the membrane. This is an uncharacterized protein from Caenorhabditis elegans.